The primary structure comprises 1849 residues: Brefeldin A-inhibited guanine nucleotide-exchange protein 1 (1849 aa).

The segment at 2–224 (YEGKKTKNMF…QEAKQMEKER (223 aa)) is DCB; DCB:DCB domain and DCB:HUS domain interaction. A compositionally biased stretch (basic and acidic residues) spans 46 to 58 (AETEKQSPPHGEA). Disordered regions lie at residues 46-65 (AETE…SSTL), 216-248 (EAKQ…QLRY), 267-302 (LHTN…DQAT), and 378-413 (TPIS…SPGA). At Ser52 the chain carries Phosphoserine. Positions 267–277 (LHTNDVDKSLQ) are enriched in basic and acidic residues. Phosphoserine is present on residues Ser286, Ser289, Ser290, Ser397, and Ser410. The segment covering 394-409 (SVSSNDTQESGNSSGP) has biased composition (polar residues). Positions 557–577 (ADAQSVVDIYVNYDCDLNAAN) are HUS; DCB:HUS domain interaction. The region spanning 709 to 840 (FNKKPKRGIQ…IIMLTTDLHS (132 aa)) is the SEC7 domain. Positions 711–715 (KKPKR) match the Nuclear localization signal (NLS) motif. A Phosphoserine modification is found at Ser1079. The disordered stretch occupies residues 1543-1562 (RPNSGETAPPPPSPVSEKPL). Phosphoserine is present on residues Ser1566 and Ser1569.

In terms of assembly, homodimer. Interacts with ARFGEF2/BIG2; both proteins are probably part of the same or very similar macromolecular complexes. Interacts with FKBP2. Interacts with MYO9B. Interacts with PRKAR1A and PRKAR2A. Interacts with PPP1CC. Interacts with NCL, FBL, NUP62 and U3 small nucleolar RNA. Interacts with DPY30. Interacts with PDE3A. Interacts with KANK1. Interacts with TBC1D22A and TBC1D22B. Interacts (via N-terminus) with ARL1. In terms of processing, phosphorylated. In vitro phosphorylated by PKA reducing its GEF activity and dephosphorylated by phosphatase PP1. As to expression, expressed in placenta, lung, heart, brain, kidney and pancreas.

It localises to the cytoplasm. The protein resides in the perinuclear region. Its subcellular location is the golgi apparatus. The protein localises to the trans-Golgi network membrane. It is found in the nucleus. It localises to the nucleolus. The protein resides in the nucleus matrix. Its activity is regulated as follows. Inhibited by brefeldin A. Promotes guanine-nucleotide exchange on ARF1 and ARF3. Promotes the activation of ARF1/ARF3 through replacement of GDP with GTP. Involved in vesicular trafficking. Required for the maintenance of Golgi structure; the function may be independent of its GEF activity. Required for the maturation of integrin beta-1 in the Golgi. Involved in the establishment and persistence of cell polarity during directed cell movement in wound healing. Proposed to act as A kinase-anchoring protein (AKAP) and may mediate crosstalk between Arf and PKA pathways. Inhibits GAP activity of MYO9B probably through competitive RhoA binding. The function in the nucleus remains to be determined. The polypeptide is Brefeldin A-inhibited guanine nucleotide-exchange protein 1 (ARFGEF1) (Homo sapiens (Human)).